A 96-amino-acid chain; its full sequence is Conglutin delta 4 (96 aa).

The N-terminal stretch at 1-22 is a signal peptide; it reads MARLTILIAFVAALVLVVHTSA. Disulfide bonds link Cys-29/Cys-78 and Cys-80/Cys-91.

It belongs to the 2S seed storage albumins family.

Its subcellular location is the endoplasmic reticulum. This chain is Conglutin delta 4, found in Lupinus angustifolius (Narrow-leaved blue lupine).